A 257-amino-acid polypeptide reads, in one-letter code: Hydroxyacylglutathione hydrolase (257 aa).

Residues histidine 54, histidine 56, aspartate 58, histidine 59, histidine 113, aspartate 137, and histidine 175 each contribute to the Zn(2+) site.

It belongs to the metallo-beta-lactamase superfamily. Glyoxalase II family. Monomer. Requires Zn(2+) as cofactor.

The catalysed reaction is an S-(2-hydroxyacyl)glutathione + H2O = a 2-hydroxy carboxylate + glutathione + H(+). It participates in secondary metabolite metabolism; methylglyoxal degradation; (R)-lactate from methylglyoxal: step 2/2. Its function is as follows. Thiolesterase that catalyzes the hydrolysis of S-D-lactoyl-glutathione to form glutathione and D-lactic acid. The protein is Hydroxyacylglutathione hydrolase of Microcystis aeruginosa (strain NIES-843 / IAM M-2473).